The chain runs to 120 residues: NAD(P)H-quinone oxidoreductase subunit 3, chloroplastic (120 aa).

Helical transmembrane passes span 9–29 (IFWA…XISG), 64–84 (MFAL…PWAM), and 88–108 (VLGV…IVGL).

The protein belongs to the complex I subunit 3 family. NDH is composed of at least 16 different subunits, 5 of which are encoded in the nucleus.

Its subcellular location is the plastid. It is found in the chloroplast thylakoid membrane. The enzyme catalyses a plastoquinone + NADH + (n+1) H(+)(in) = a plastoquinol + NAD(+) + n H(+)(out). It catalyses the reaction a plastoquinone + NADPH + (n+1) H(+)(in) = a plastoquinol + NADP(+) + n H(+)(out). Functionally, NDH shuttles electrons from NAD(P)H:plastoquinone, via FMN and iron-sulfur (Fe-S) centers, to quinones in the photosynthetic chain and possibly in a chloroplast respiratory chain. The immediate electron acceptor for the enzyme in this species is believed to be plastoquinone. Couples the redox reaction to proton translocation, and thus conserves the redox energy in a proton gradient. In Eucalyptus globulus subsp. globulus (Tasmanian blue gum), this protein is NAD(P)H-quinone oxidoreductase subunit 3, chloroplastic.